A 393-amino-acid polypeptide reads, in one-letter code: Cytohesin-4 (393 aa).

Residues 13-56 (SGEAKELQQIKWHRKQLLEDIQKLKDEIADVFAQIDCFESTEES) adopt a coiled-coil conformation. The SEC7 domain occupies 54-241 (EESRMAQKEK…RNLFDSIKSE (188 aa)). The PH domain maps to 259–375 (NPDREGWLLK…WIEAIRASIT (117 aa)). A 1,2-diacyl-sn-glycero-3-phospho-(1D-myo-inositol-3,4,5-trisphosphate)-binding positions include 268-275 (KLGGRVKT), Arg-279, Tyr-290, and Arg-300. Residues 386–393 (RKKKIVGK) form a C-terminal autoinhibitory region region.

Its subcellular location is the cell membrane. Promotes guanine-nucleotide exchange on ARF1 and ARF5. Promotes the activation of ARF factors through replacement of GDP with GTP. This Mus musculus (Mouse) protein is Cytohesin-4 (Cyth4).